The chain runs to 79 residues: Beta-defensin 15 (79 aa).

The N-terminal stretch at 1–20 (MKTFLFLFAVFFFLDPAKNA) is a signal peptide. Intrachain disulfides connect cysteine 26–cysteine 53, cysteine 33–cysteine 47, and cysteine 37–cysteine 54.

The protein belongs to the beta-defensin family.

It localises to the secreted. Has antibacterial activity. In Rattus norvegicus (Rat), this protein is Beta-defensin 15 (Defb15).